The chain runs to 70 residues: Small ribosomal subunit protein bS21 (70 aa).

This sequence belongs to the bacterial ribosomal protein bS21 family.

In Methylobacillus flagellatus (strain ATCC 51484 / DSM 6875 / VKM B-1610 / KT), this protein is Small ribosomal subunit protein bS21.